The chain runs to 185 residues: UPF0301 protein HDEF_0602 (185 aa).

Belongs to the UPF0301 (AlgH) family.

This chain is UPF0301 protein HDEF_0602, found in Hamiltonella defensa subsp. Acyrthosiphon pisum (strain 5AT).